Reading from the N-terminus, the 210-residue chain is Cuticle collagen 2C (210 aa).

The interval 11-210 (CTGGQAGPPG…GVFFEDGTRR (200 aa)) is disordered. 2 stretches are compositionally biased toward pro residues: residues 40-76 (PGRP…PGEP) and 88-103 (DAPP…PGPP). Residues 105 to 122 (KAGAPGAAGQPGANAPSE) show a composition bias toward low complexity. The span at 123 to 144 (PLVPGPPGPPGPTGPEGPPGPN) shows a compositional bias: pro residues. The span at 167–179 (HPGAPGNAGHPGQ) shows a compositional bias: low complexity.

The protein belongs to the cuticular collagen family.

Its function is as follows. Nematode cuticles are composed largely of collagen-like proteins. The cuticle functions both as an exoskeleton and as a barrier to protect the worm from its environment. This chain is Cuticle collagen 2C (2C), found in Haemonchus contortus (Barber pole worm).